Consider the following 411-residue polypeptide: Putative ion-transport protein YfeO (411 aa).

11 helical membrane-spanning segments follow: residues 9-29 (MLLL…VLIA), 54-74 (DSPF…GLII), 99-119 (ALPG…SLGP), 149-169 (ILAS…AALI), 186-206 (LFAP…FFHP), 223-243 (IASG…AVWC), 258-278 (VLIL…GGPL), 296-316 (LGAG…VIAA), 322-342 (GGRI…LHAH), 343-363 (VEAV…VLVV), and 386-406 (LLCI…LLAA).

Belongs to the chloride channel (TC 2.A.49) family.

Its subcellular location is the cell membrane. The polypeptide is Putative ion-transport protein YfeO (Salmonella paratyphi A (strain ATCC 9150 / SARB42)).